We begin with the raw amino-acid sequence, 246 residues long: MSDTPLIQPANVGEGVYEEGREGYGHIKSYVRRAGRMSSAQENYYAEMMPKIGLVYASQPIDLAAFFGRNNPKVLEIGTGMGETTAKIADANRDIDYLGVEVHVPGVGALCKQIAERELTNLRICQHDAVEVVRDMLPEDSLDGVHVFFPDPWHKARHNKRRLIQSPFVALLASRLKPGGYFHCATDWEEYAHQMLEVLSGEPTLVNSSEGFAPRPDYRPLTKFENRGLRLGHGVWDVIFRKKQLA.

S-adenosyl-L-methionine is bound by residues glutamate 76, glutamate 101, aspartate 128, and aspartate 151. Aspartate 151 is a catalytic residue. Lysine 155 serves as a coordination point for substrate. Residues 157 to 162 (RHNKRR) form an interaction with RNA region. Substrate is bound by residues aspartate 187 and 222–225 (TKFE).

The protein belongs to the class I-like SAM-binding methyltransferase superfamily. TrmB family.

The enzyme catalyses guanosine(46) in tRNA + S-adenosyl-L-methionine = N(7)-methylguanosine(46) in tRNA + S-adenosyl-L-homocysteine. It functions in the pathway tRNA modification; N(7)-methylguanine-tRNA biosynthesis. Catalyzes the formation of N(7)-methylguanine at position 46 (m7G46) in tRNA. The sequence is that of tRNA (guanine-N(7)-)-methyltransferase from Dechloromonas aromatica (strain RCB).